The chain runs to 228 residues: MIGIIGAMEEEVAILKDKIVNLEIINVAHVVFYKGRLHDKEVILTQSGIGKVNVAISTTLLINRFHPDLIINTGSAGALDKSLGVGDIIVSDMVAYHDADARAFGYQLGQIPQMPAQFVADSHLIELAKEAINDQKWVAKSGLIVSGDSFIGTAEQRADIKTNFPQAMAAEMEATAIAQTCYQFNLPFIITRAISDLADGDAGITFEAFLEKAAIASSQIVDRLIKTI.

The active-site Proton acceptor is the E11. Substrate is bound by residues G77, I151, and 172–173 (ME). The active-site Proton donor is D196.

This sequence belongs to the PNP/UDP phosphorylase family. MtnN subfamily.

It carries out the reaction S-adenosyl-L-homocysteine + H2O = S-(5-deoxy-D-ribos-5-yl)-L-homocysteine + adenine. The enzyme catalyses S-methyl-5'-thioadenosine + H2O = 5-(methylsulfanyl)-D-ribose + adenine. The catalysed reaction is 5'-deoxyadenosine + H2O = 5-deoxy-D-ribose + adenine. Its pathway is amino-acid biosynthesis; L-methionine biosynthesis via salvage pathway; S-methyl-5-thio-alpha-D-ribose 1-phosphate from S-methyl-5'-thioadenosine (hydrolase route): step 1/2. Functionally, catalyzes the irreversible cleavage of the glycosidic bond in both 5'-methylthioadenosine (MTA) and S-adenosylhomocysteine (SAH/AdoHcy) to adenine and the corresponding thioribose, 5'-methylthioribose and S-ribosylhomocysteine, respectively. Also cleaves 5'-deoxyadenosine, a toxic by-product of radical S-adenosylmethionine (SAM) enzymes, into 5-deoxyribose and adenine. This Staphylococcus saprophyticus subsp. saprophyticus (strain ATCC 15305 / DSM 20229 / NCIMB 8711 / NCTC 7292 / S-41) protein is 5'-methylthioadenosine/S-adenosylhomocysteine nucleosidase.